The primary structure comprises 89 residues: Mitochondrial import inner membrane translocase subunit Tim9 (89 aa).

Ala2 is modified (N-acetylalanine). Residues 28–52 (CFLDCVKDFTTREVKPEEVTCSEHC) carry the Twin CX3C motif motif. 2 cysteine pairs are disulfide-bonded: Cys28/Cys52 and Cys32/Cys48.

Belongs to the small Tim family. As to quaternary structure, heterohexamer; composed of 3 copies of TIMM9 and 3 copies of TIMM10/TIM10A, named soluble 70 kDa complex. The complex forms a 6-bladed alpha-propeller structure and associates with the TIMM22 component of the TIM22 complex. Interacts with multi-pass transmembrane proteins in transit. Also forms a complex composed of TIMM9, TIMM10/TIM10A and FXC1/TIM10B.

The protein resides in the mitochondrion inner membrane. Mitochondrial intermembrane chaperone that participates in the import and insertion of multi-pass transmembrane proteins into the mitochondrial inner membrane. May also be required for the transfer of beta-barrel precursors from the TOM complex to the sorting and assembly machinery (SAM complex) of the outer membrane. Acts as a chaperone-like protein that protects the hydrophobic precursors from aggregation and guide them through the mitochondrial intermembrane space. The protein is Mitochondrial import inner membrane translocase subunit Tim9 (Timm9) of Rattus norvegicus (Rat).